Reading from the N-terminus, the 56-residue chain is Genome polyprotein (56 aa).

The tract at residues 1 to 30 (ETMLDRIASGDLESSVDDPRSAEDKRFESH) is disordered. Residues 17–30 (DDPRSAEDKRFESH) show a composition bias toward basic and acidic residues.

It belongs to the picornaviridae polyprotein family. As to quaternary structure, homopentamer. Homooligomer. In terms of assembly, interacts with capsid protein VP2. Interacts with capsid protein VP3. Specific enzymatic cleavages by viral protease in vivo yield a variety of precursors and mature proteins. Polyprotein processing intermediates are produced, such as P1-2A which is a functional precursor of the structural proteins, VP0 which is a VP4-VP2 precursor, VP1-2A precursor, 3ABC precursor which is a stable and catalytically active precursor of 3A, 3B and 3C proteins, 3AB and 3CD precursors. The assembly signal 2A is removed from VP1-2A by a host protease, possibly host Cathepsin L. This cleavage occurs over a region of 3 amino-acids probably generating VP1 proteins with heterogeneous C-termini. In terms of processing, the assembly signal 2A is removed from VP1-2A by a host protease, possibly host Cathepsin L in naked virions. This cleavage does not occur in enveloped virions. This cleavage occurs over a region of 3 amino-acids probably generating VP1 proteins with heterogeneous C-termini.

Its subcellular location is the virion. It is found in the host endosome. It localises to the host multivesicular body. Capsid proteins VP1, VP2, and VP3 form a closed capsid enclosing the viral positive strand RNA genome. All these proteins contain a beta-sheet structure called beta-barrel jelly roll. Together they form an icosahedral capsid (T=3) composed of 60 copies of each VP1, VP2, and VP3, with a diameter of approximately 300 Angstroms. VP1 is situated at the 12 fivefold axes, whereas VP2 and VP3 are located at the quasi-sixfold axes. The naked capsid interacts with the host receptor HAVCR1 to provide virion attachment to and probably entry into the target cell. Its function is as follows. Precursor component of immature procapsids that corresponds to an extended form of the structural protein VP1. After maturation, possibly by the host Cathepsin L, the assembly signal 2A is cleaved to give rise to the mature VP1 protein. This is Genome polyprotein from Callithrix (Owl-faced monkey).